The chain runs to 116 residues: Ig heavy chain V region 441 (116 aa).

The signal sequence occupies residues 1 to 18 (MDFGLIFFIVALLKGVQC). The region spanning 19 to 116 (EVKLLESGGG…EDTALYYCAR (98 aa)) is the Ig-like domain.

This is Ig heavy chain V region 441 from Mus musculus (Mouse).